The following is a 598-amino-acid chain: MWSTISISMNVAILKKPLNFLHNSNNKASNPRCVSSTRRRPSCPLQLDVEPRRSGNYQPSAWDFNYIQSLNNNHSKEERHLQGKAKLIEEVKMLLEQEMAAVQQLEFIEDLKNLGLSYLFQDEIKIILNSIYNHHKCFHNNHQQRTDENADLYFVALGFRLFRQHGFKVSQEVFDCFKNEEGSDFIPNLAEDTKGLLQLYEASYLVRQDEDTLEMARQFSTKILQKKVEEKMIEENLLSWTCHSLELPLHWRVQRIEAKWFLDAYASKPDMNPIIFELAKLEFNIAQALQQGELKDLSRWWNDTGIAEKLPFARDRIVEAHYWAIGTLEPYQYRYQRSLIAKIIALTTVVDDVYDVYGTLDEPQLFTDAIRRWDIESINQLPHYLQLCYLAIYNFVSELAYDIFRDKGFNSLPYLHKSWLDLVEAYFLEAKWFHSGYTPTLEEYLNNSKMTITCPAIVSEIYFAFANSIDKTEVESVYKYHDILYLSGMLLRLPDDLGTTTFEMKRGDVAKAIQCYMKEHNASEEEAREHIRFLMREAWKQMNTAAAANNCPFVNDFVVGAASLGRVANFVYVEGDGFGVQHSKIHQQMAELLFYPYQ.

The N-terminal 34 residues, 1–34 (MWSTISISMNVAILKKPLNFLHNSNNKASNPRCV), are a transit peptide targeting the chloroplast. Mg(2+) is bound by residues Asp-351, Asp-355, Asp-495, Thr-499, and Glu-503. A DDXXD motif motif is present at residues 351–355 (DDVYD).

It belongs to the terpene synthase family. The cofactor is Mg(2+). Mn(2+) serves as cofactor.

Its subcellular location is the plastid. It localises to the chloroplast. The enzyme catalyses (2E)-geranyl diphosphate + H2O = (1S,2S,4R)-endo-fenchol + diphosphate. The protein operates within secondary metabolite biosynthesis; terpenoid biosynthesis. Monoterpene synthase that catalyzes the formation of fenchol from geranyl diphosphate. The sequence is that of (-)-endo-fenchol synthase, chloroplastic (FES) from Ocimum basilicum (Sweet basil).